The sequence spans 267 residues: Tryptophan synthase alpha chain (267 aa).

Active-site proton acceptor residues include E49 and D60.

This sequence belongs to the TrpA family. As to quaternary structure, tetramer of two alpha and two beta chains.

The catalysed reaction is (1S,2R)-1-C-(indol-3-yl)glycerol 3-phosphate + L-serine = D-glyceraldehyde 3-phosphate + L-tryptophan + H2O. The protein operates within amino-acid biosynthesis; L-tryptophan biosynthesis; L-tryptophan from chorismate: step 5/5. Functionally, the alpha subunit is responsible for the aldol cleavage of indoleglycerol phosphate to indole and glyceraldehyde 3-phosphate. This Citrifermentans bemidjiense (strain ATCC BAA-1014 / DSM 16622 / JCM 12645 / Bem) (Geobacter bemidjiensis) protein is Tryptophan synthase alpha chain.